A 501-amino-acid polypeptide reads, in one-letter code: DEEITCQENLPFTCGNTDALNSSSFSSDFIFGVASSAYQIEGTIGRGLNIWDGFTHRYPNKSGPDHGNGDTTCDSFSYWQKDIDVLDELNATGYRFSIAWSRIIPRGKRSRGVNEKGIDYYHGLISGLIKKGITPFVTLFHWDLPQTLQDEYEGFLDPQIIDDFKDYADLCFEEFGDSVKYWLTINQLYSVPTRGYGSALDAPGRCSPTVDPSCYAGNSSTEPYIVAHHQLLAHAKVVDLYRKNYTHQGGKIGPTMITRWFLPYNDTDRHSIAATERMKEFFLGWFMGPLTNGTYPQIMIDTVGERLPSFSPEESNLVKGSYDFLGLNYYFTQYAQPSPNPVNSTNHTAMMDAGAKLTYINASGHYIGPLFEKDKADSTDNIYYYPKGIYSVMDYFKNKYYNPLIYVTENGISTPGDENRNQSMLDYTRIDYLCSHLCFLNKVIKEKDVNVKGYLAWALGDNYEFNKGFTVRFGLSYIDWNNVTDRDLKKSGQWYQSFISP.

3 disulfide bridges follow: cysteine 6/cysteine 438, cysteine 14/cysteine 434, and cysteine 206/cysteine 214. N-linked (GlcNAc...) asparagine glycosylation is present at asparagine 21. Glutamine 39 contributes to the substrate binding site. Histidine 56 lines the Zn(2+) pocket. A glycan (N-linked (GlcNAc...) asparagine) is linked at asparagine 60. Position 70 (aspartate 70) interacts with Zn(2+). Asparagine 90 is a glycosylation site (N-linked (GlcNAc...) asparagine). Substrate is bound by residues histidine 141 and asparagine 186. Residue glutamine 187 participates in L-ascorbate binding. Asparagine 218 and asparagine 244 each carry an N-linked (GlcNAc...) asparagine glycan. Arginine 259 provides a ligand contact to L-ascorbate. Residues asparagine 265 and asparagine 292 are each glycosylated (N-linked (GlcNAc...) asparagine). Tyrosine 330 is a binding site for substrate. Residues asparagine 343, asparagine 346, and asparagine 361 are each glycosylated (N-linked (GlcNAc...) asparagine). Glutamate 409 (nucleophile) is an active-site residue. Residues tryptophan 457 and 464–465 (EF) each bind substrate. Asparagine 482 is a glycosylation site (N-linked (GlcNAc...) asparagine).

Belongs to the glycosyl hydrolase 1 family. Homodimer. In vacuoles called myrosin grains of a certain class of cells, myrosin cells, distributed in the cotyledons and the axis of the embryo as well as in different organs of the growing plant.

It is found in the vacuole. It carries out the reaction a thioglucoside + H2O = a sugar + a thiol.. Degradation of glucosinolates (glucose residue linked by a thioglucoside bound to an amino acid derivative) to glucose, sulfate and any of the products: thiocyanates, isothiocyanates, nitriles, epithionitriles or oxazolidine-2-thiones. The polypeptide is Myrosinase MA1 (Sinapis alba (White mustard)).